Reading from the N-terminus, the 153-residue chain is D-aminoacyl-tRNA deacylase (153 aa).

A Gly-cisPro motif, important for rejection of L-amino acids motif is present at residues 137-138 (GP).

The protein belongs to the DTD family. As to quaternary structure, homodimer.

The protein localises to the cytoplasm. It carries out the reaction glycyl-tRNA(Ala) + H2O = tRNA(Ala) + glycine + H(+). The enzyme catalyses a D-aminoacyl-tRNA + H2O = a tRNA + a D-alpha-amino acid + H(+). In terms of biological role, an aminoacyl-tRNA editing enzyme that deacylates mischarged D-aminoacyl-tRNAs. Also deacylates mischarged glycyl-tRNA(Ala), protecting cells against glycine mischarging by AlaRS. Acts via tRNA-based rather than protein-based catalysis; rejects L-amino acids rather than detecting D-amino acids in the active site. By recycling D-aminoacyl-tRNA to D-amino acids and free tRNA molecules, this enzyme counteracts the toxicity associated with the formation of D-aminoacyl-tRNA entities in vivo and helps enforce protein L-homochirality. The polypeptide is D-aminoacyl-tRNA deacylase (Myxococcus xanthus (strain DK1622)).